Consider the following 518-residue polypeptide: D-aminopeptidase (518 aa).

The active-site Nucleophile is the Ser62. The Proton donor/acceptor role is filled by Lys65. An important for specificity region spans residues 477–487; that stretch reads QRSMDAPSPGE. Asp481 provides a ligand contact to substrate.

Belongs to the peptidase S12 family. As to quaternary structure, homodimer.

The enzyme catalyses Release of an N-terminal D-amino acid from a peptide, Xaa-|-Yaa-, in which Xaa is preferably D-Ala, D-Ser or D-Thr. D-amino acid amides and methyl esters also are hydrolyzed, as is glycine amide.. With respect to regulation, inhibited by beta-lactam compounds such as 6-aminopenicillic acid, 7-aminocephalosporanic acid, benzylpenicillin and ampicillin. Inhibited by p-chloromercuribenzoate. Its function is as follows. Hydrolyzes N-terminal residues in D-amino acid-containing peptides. This is D-aminopeptidase from Brucella abortus (strain S19).